Here is a 458-residue protein sequence, read N- to C-terminus: Probable M18 family aminopeptidase 1 (458 aa).

His95, His170, and His434 together coordinate Zn(2+).

This sequence belongs to the peptidase M18 family. Zn(2+) serves as cofactor.

This is Probable M18 family aminopeptidase 1 (apeA) from Borreliella burgdorferi (strain ATCC 35210 / DSM 4680 / CIP 102532 / B31) (Borrelia burgdorferi).